Consider the following 183-residue polypeptide: Capsid protein (183 aa).

The interval 136–183 (NAPILSTLPETTVVRRRGRSPRRRTPSPRRRRSQSPRRRRSQSRESQC) is disordered. Residues 149 to 176 (VRRRGRSPRRRTPSPRRRRSQSPRRRRS) show a composition bias toward basic residues. Phosphoserine; by host is present on residues Ser155, Ser162, and Ser170. A 1; half-length repeat occupies 155-161 (SPRRRTP). The 3 X 8 AA repeats of S-P-R-R-R-[PR]-S-Q stretch occupies residues 155–177 (SPRRRTPSPRRRRSQSPRRRRSQ). Positions 158–175 (RRTPSPRRRRSQSPRRRR) match the Bipartite nuclear localization signal motif. Repeat copies occupy residues 162–169 (SPRRRRSQ) and 170–177 (SPRRRRSQ). The interval 177–183 (QSRESQC) is RNA binding.

It belongs to the orthohepadnavirus core antigen family. As to quaternary structure, homodimerizes, then multimerizes. Interacts with cytosol exposed regions of viral L glycoprotein present in the reticulum-to-Golgi compartment. Interacts with human FLNB. Phosphorylated form interacts with host importin alpha; this interaction depends on the exposure of the NLS, which itself depends upon genome maturation and/or phosphorylation of the capsid protein. Interacts with host NUP153. In terms of processing, phosphorylated by host SRPK1, SRPK2, and maybe protein kinase C or GAPDH. Phosphorylation is critical for pregenomic RNA packaging. Protein kinase C phosphorylation is stimulated by HBx protein and may play a role in transport of the viral genome to the nucleus at the late step during the viral replication cycle.

It is found in the virion. The protein localises to the host cytoplasm. In terms of biological role, self assembles to form an icosahedral capsid. Most capsids appear to be large particles with an icosahedral symmetry of T=4 and consist of 240 copies of capsid protein, though a fraction forms smaller T=3 particles consisting of 180 capsid proteins. Entering capsids are transported along microtubules to the nucleus. Phosphorylation of the capsid is thought to induce exposure of nuclear localization signal in the C-terminal portion of the capsid protein that allows binding to the nuclear pore complex via the importin (karyopherin-) alpha and beta. Capsids are imported in intact form through the nuclear pore into the nuclear basket, where it probably binds NUP153. Only capsids that contain the mature viral genome can release the viral DNA and capsid protein into the nucleoplasm. Immature capsids get stuck in the basket. Capsids encapsulate the pre-genomic RNA and the P protein. Pre-genomic RNA is reverse-transcribed into DNA while the capsid is still in the cytoplasm. The capsid can then either be directed to the nucleus, providing more genomes for transcription, or bud through the endoplasmic reticulum to provide new virions. This chain is Capsid protein, found in Hepatitis B virus genotype D subtype ayw (isolate Italy/CI/1992) (HBV-D).